A 92-amino-acid polypeptide reads, in one-letter code: Small ribosomal subunit protein uS19 (92 aa).

It belongs to the universal ribosomal protein uS19 family.

Functionally, protein S19 forms a complex with S13 that binds strongly to the 16S ribosomal RNA. The sequence is that of Small ribosomal subunit protein uS19 from Vibrio campbellii (strain ATCC BAA-1116).